The sequence spans 802 residues: Phenylalanine--tRNA ligase beta subunit (802 aa).

In terms of domain architecture, tRNA-binding spans 39–154; that stretch reads AEGLSKLVVG…EDAVPGDSIF (116 aa). Residues 407–482 form the B5 domain; it reads TEPVQVSTSL…RIYGYEKLPT (76 aa). 4 residues coordinate Mg(2+): D460, D466, E469, and E470. The 94-residue stretch at 709–802 folds into the FDX-ACB domain; sequence TKFPAVSRDI…LTEKVEAEVR (94 aa).

This sequence belongs to the phenylalanyl-tRNA synthetase beta subunit family. Type 1 subfamily. Tetramer of two alpha and two beta subunits. It depends on Mg(2+) as a cofactor.

The protein localises to the cytoplasm. It carries out the reaction tRNA(Phe) + L-phenylalanine + ATP = L-phenylalanyl-tRNA(Phe) + AMP + diphosphate + H(+). The sequence is that of Phenylalanine--tRNA ligase beta subunit from Streptococcus thermophilus (strain CNRZ 1066).